The chain runs to 763 residues: ATP-dependent RNA helicase SUV3 homolog, mitochondrial (763 aa).

The N-terminal 43 residues, 1-43, are a transit peptide targeting the mitochondrion; sequence MQNCRRCISLTGLLRMTLYLRPSFSIDLSLRRLHRAAFLFSRK. A Helicase ATP-binding domain is found at 181-321; that stretch reads NARAITRKIV…ALDLLQKICE (141 aa). Residue 194 to 201 coordinates ATP; that stretch reads GPTNSGKT. The Helicase C-terminal domain occupies 330–508; that stretch reads RLYDRLTELT…PTADQIELYA (179 aa). Residues 724–763 form a disordered region; that stretch reads AQQLGKSNSQSNENSEPVVNSDDEDNYSGIGRKTRKKRRK. Polar residues predominate over residues 727 to 741; that stretch reads LGKSNSQSNENSEPV.

The protein belongs to the helicase family. Mg(2+) is required as a cofactor. Requires Mn(2+) as cofactor.

It is found in the mitochondrion. It catalyses the reaction ATP + H2O = ADP + phosphate + H(+). In terms of biological role, major helicase player in mitochondrial RNA metabolism and maintenance. Likely component of the mitochondrial degradosome (mtEXO) complex, that degrades 3' overhang double-stranded RNA with a 3'-to-5' directionality in an ATP-dependent manner. ATPase and ATP-dependent multisubstrate helicase, able to unwind double-stranded (ds) DNA and RNA, and RNA/DNA heteroduplexes in the 5'-to-3' direction. Regulates mRNA stability and is required for the correct processing and maturation of mitochondrial transcripts. The chain is ATP-dependent RNA helicase SUV3 homolog, mitochondrial from Drosophila melanogaster (Fruit fly).